Consider the following 90-residue polypeptide: Acylphosphatase (90 aa).

Residues 5 to 90 (SFVVRVWGLV…PPKGSGFHTN (86 aa)) form the Acylphosphatase-like domain. Active-site residues include R20 and N38.

Belongs to the acylphosphatase family.

The catalysed reaction is an acyl phosphate + H2O = a carboxylate + phosphate + H(+). This Aeromonas hydrophila subsp. hydrophila (strain ATCC 7966 / DSM 30187 / BCRC 13018 / CCUG 14551 / JCM 1027 / KCTC 2358 / NCIMB 9240 / NCTC 8049) protein is Acylphosphatase (acyP).